The sequence spans 817 residues: Disks large homolog 3 (817 aa).

An N-acetylmethionine mark is found at Met-1 and His-2. Residues 33–101 (WQVPDPYGPG…GKSTPKLNGS (69 aa)) are disordered. A compositionally biased stretch (gly residues) spans 40–53 (GPGGGNGASAGYGG). Over residues 57 to 69 (QTLPSQAGATPTP) the composition is skewed to polar residues. 3 PDZ domains span residues 130 to 217 (EEIV…VRRR), 226 to 311 (EVNL…KVAK), and 379 to 465 (DFTR…VAQY). Ser-139 carries the phosphoserine modification. Residues 501 to 571 (KRSLYVRALF…PSKKRVEKKE (71 aa)) enclose the SH3 domain. The 176-residue stretch at 627-802 (ARPVIILGPM…IYNKIKQIIE (176 aa)) folds into the Guanylate kinase-like domain. Tyr-673 carries the phosphotyrosine modification.

Belongs to the MAGUK family. Interacts through its PDZ domains with NETO1, GRIN2B and SYNGAP1. Interacts through its guanylate kinase-like domain with DLGAP1, DLGAP2, DLGAP3 and DLGAP4. Interacts with FLTP/C1orf192. Interacts through its PDZ domains with APC. Interacts through its first two PDZ domains with ERBB4. Interacts through its third PDZ domain with NLGN1, and probably with NLGN2 and NLGN3. Interacts with FRMPD4 (via C-terminus). Interacts with LRFN1, LRFN2 and LRFN4. Interacts with DGKI (via PDZ-binding motif).

Functionally, required for learning most likely through its role in synaptic plasticity following NMDA receptor signaling. This chain is Disks large homolog 3 (DLG3), found in Homo sapiens (Human).